The sequence spans 292 residues: Ribosomal RNA small subunit methyltransferase A (292 aa).

Positions 29, 31, 56, 77, 102, and 127 each coordinate S-adenosyl-L-methionine.

It belongs to the class I-like SAM-binding methyltransferase superfamily. rRNA adenine N(6)-methyltransferase family. RsmA subfamily.

It is found in the cytoplasm. It catalyses the reaction adenosine(1518)/adenosine(1519) in 16S rRNA + 4 S-adenosyl-L-methionine = N(6)-dimethyladenosine(1518)/N(6)-dimethyladenosine(1519) in 16S rRNA + 4 S-adenosyl-L-homocysteine + 4 H(+). Functionally, specifically dimethylates two adjacent adenosines (A1518 and A1519) in the loop of a conserved hairpin near the 3'-end of 16S rRNA in the 30S particle. May play a critical role in biogenesis of 30S subunits. This is Ribosomal RNA small subunit methyltransferase A from Bacillus pumilus (strain SAFR-032).